A 483-amino-acid polypeptide reads, in one-letter code: Zinc metalloproteinase/disintegrin VMP-II (483 aa).

An N-terminal signal peptide occupies residues 1–20 (MIQVLLVTLCLAAFPYQGNS). Residues 21-191 (IILESGNVND…KASQLNLTPE (171 aa)) constitute a propeptide that is removed on maturation. The region spanning 198-394 (RYIELVVVAD…HNPQCMLNEP (197 aa)) is the Peptidase M12B domain. The Ca(2+) site is built by glutamate 201 and aspartate 285. Cystine bridges form between cysteine 309-cysteine 389, cysteine 349-cysteine 373, and cysteine 351-cysteine 356. Position 334 (histidine 334) interacts with Zn(2+). Glutamate 335 is a catalytic residue. Zn(2+) is bound by residues histidine 338 and histidine 344. Positions 389 and 392 each coordinate Ca(2+). The propeptide occupies 395–414 (LRTDIVSTPVSGNELWETGE). A Disintegrin domain is found at 402–483 (TPVSGNELWE…AGCPRNPFHA (82 aa)). Intrachain disulfides connect cysteine 425–cysteine 448, cysteine 439–cysteine 445, cysteine 444–cysteine 469, and cysteine 457–cysteine 476. The Cell attachment site; atypical (KGD) motif lies at 461–463 (KGD).

It belongs to the venom metalloproteinase (M12B) family. P-II subfamily. P-IIe sub-subfamily. As to quaternary structure, heterodimer; disulfide-linked (disintegrin). The cofactor is Zn(2+). In terms of tissue distribution, expressed by the venom gland.

Its subcellular location is the secreted. Its activity is regulated as follows. Inhibited by EDTA and 1,10-phenanthroline, but not by PMSF. In terms of biological role, has fibrinolytic activity. The recombinant enzyme cleaves both alpha- (FGA) and beta-chains (FGB) of fibrinogen, but not the gamma-chain. The recombinant protein does not produce hemorrhage in mice and does not have effect on ADP- or collagen-stimulated platelet aggregation. Functionally, inhibits platelet aggregation induced by ADP, thrombin, platelet-activating factor and collagen. Acts by inhibiting fibrinogen interaction with platelet receptors GPIIb/GPIIIa (ITGA2B/ITGB3). This Agkistrodon piscivorus leucostoma (Western cottonmouth) protein is Zinc metalloproteinase/disintegrin VMP-II.